The primary structure comprises 242 residues: E3 ubiquitin-protein ligase ZNRF2 (242 aa).

Residues 1-141 (MGAKQSGPAA…VGGSPGGPRL (141 aa)) are disordered. G2 carries N-myristoyl glycine lipidation. S19, S21, and S25 each carry phosphoserine. Positions 19–29 (SGSDLPSSSSG) are enriched in low complexity. Gly residues predominate over residues 30–41 (GANGTAGGGGGA). The span at 59-97 (PSASGGAAAAAAAPAAPAAPRSRSLGGAVGSVASGARAA) shows a compositional bias: low complexity. Residues S82, S89, S113, S116, and S135 each carry the phosphoserine modification. The span at 99–118 (SPFSIPNSSSGPYGSQDSVH) shows a compositional bias: polar residues. Phosphoserine; by MTOR is present on S145. Phosphoserine occurs at positions 151 and 193. The RING-type; atypical zinc finger occupies 199 to 240 (CAICLEELQQGDTIARLPCLCIYHKGCIDEWFEVNRSCPEHP).

In terms of assembly, interacts with UBE2N. Interacts with ZNRF1. Interacts (when phosphorylated) with YWHAE. In terms of processing, phosphorylated; leading to binding to YWHAE. Phosphorylated by MTOR at Ser-145 and dephosphorylated by PP6C. Ser-145 phosphorylation stimulates vesicle-to-cytosol translocation. In terms of tissue distribution, highly expressed in the brain, with higher expression during development than in adult. Expressed also in mammary glands, testis, colon and kidney.

It is found in the endosome membrane. It localises to the lysosome membrane. The protein localises to the presynaptic cell membrane. Its subcellular location is the cytoplasm. It carries out the reaction S-ubiquitinyl-[E2 ubiquitin-conjugating enzyme]-L-cysteine + [acceptor protein]-L-lysine = [E2 ubiquitin-conjugating enzyme]-L-cysteine + N(6)-ubiquitinyl-[acceptor protein]-L-lysine.. Its pathway is protein modification; protein ubiquitination. In terms of biological role, E3 ubiquitin-protein ligase that plays a role in the establishment and maintenance of neuronal transmission and plasticity. Ubiquitinates the Na(+)/K(+) ATPase alpha-1 subunit/ATP1A1 and thereby influences its endocytosis and/or degradation. Acts also as a positive regulator of mTORC1 activation by amino acids, which functions upstream of the V-ATPase and of Rag-GTPases. In turn, phosphorylation by mTOR leads to its inhibition via targeting to the cytosol allowing a self-regulating feedback mechanism. The chain is E3 ubiquitin-protein ligase ZNRF2 (ZNRF2) from Homo sapiens (Human).